The sequence spans 261 residues: Proteasome subunit alpha type-4 (261 aa).

Phosphoserine is present on residues Ser-13 and Ser-75. Lys-127 carries the N6-acetyllysine modification. Residue Ser-173 is modified to Phosphoserine. Lys-176 carries the post-translational modification N6-acetyllysine. The disordered stretch occupies residues 240-261; that stretch reads HEEEEAKAEREKKEKEQKEKDK.

Belongs to the peptidase T1A family. The 26S proteasome consists of a 20S proteasome core and two 19S regulatory subunits. The 20S proteasome core is a barrel-shaped complex made of 28 subunits that are arranged in four stacked rings. The two outer rings are each formed by seven alpha subunits, and the two inner rings are formed by seven beta subunits. The proteolytic activity is exerted by three beta-subunits PSMB5, PSMB6 and PSMB7.

It is found in the cytoplasm. It localises to the nucleus. Its function is as follows. Component of the 20S core proteasome complex involved in the proteolytic degradation of most intracellular proteins. This complex plays numerous essential roles within the cell by associating with different regulatory particles. Associated with two 19S regulatory particles, forms the 26S proteasome and thus participates in the ATP-dependent degradation of ubiquitinated proteins. The 26S proteasome plays a key role in the maintenance of protein homeostasis by removing misfolded or damaged proteins that could impair cellular functions, and by removing proteins whose functions are no longer required. Associated with the PA200 or PA28, the 20S proteasome mediates ubiquitin-independent protein degradation. This type of proteolysis is required in several pathways including spermatogenesis (20S-PA200 complex) or generation of a subset of MHC class I-presented antigenic peptides (20S-PA28 complex). This chain is Proteasome subunit alpha type-4 (PSMA4), found in Bos taurus (Bovine).